A 94-amino-acid chain; its full sequence is MPRSIKKGPFVDDHLLKKVKEMNKSNKKQVIKTWSRRSTILPDMIGHTIAVHDGRKHVPVFITEDMVGHKLGEFAPTRTFRGHGDHTERSTSLK.

Belongs to the universal ribosomal protein uS19 family.

Functionally, protein S19 forms a complex with S13 that binds strongly to the 16S ribosomal RNA. The protein is Small ribosomal subunit protein uS19 of Natranaerobius thermophilus (strain ATCC BAA-1301 / DSM 18059 / JW/NM-WN-LF).